We begin with the raw amino-acid sequence, 336 residues long: Eukaryotic translation initiation factor 3 subunit I (336 aa).

WD repeat units lie at residues 8-49 (GHER…GTYN), 50-91 (GHNG…KAWE), 93-135 (PTAI…GPQP), 144-183 (PIGS…EVAS), 187-226 (NHIG…VIKS), and 285-324 (GGFG…FRAK).

It belongs to the eIF-3 subunit I family. As to quaternary structure, component of the eukaryotic translation initiation factor 3 (eIF-3) complex.

It is found in the cytoplasm. Its function is as follows. Component of the eukaryotic translation initiation factor 3 (eIF-3) complex, which is involved in protein synthesis of a specialized repertoire of mRNAs and, together with other initiation factors, stimulates binding of mRNA and methionyl-tRNAi to the 40S ribosome. The eIF-3 complex specifically targets and initiates translation of a subset of mRNAs involved in cell proliferation. The protein is Eukaryotic translation initiation factor 3 subunit I of Puccinia graminis f. sp. tritici (strain CRL 75-36-700-3 / race SCCL) (Black stem rust fungus).